Consider the following 343-residue polypeptide: tRNA N6-adenosine threonylcarbamoyltransferase (343 aa).

His115 and His119 together coordinate Fe cation. Residues 137-141 (LVSGG), Asp170, Gly183, Asp187, and Asn276 each bind substrate. Residue Asp306 participates in Fe cation binding.

The protein belongs to the KAE1 / TsaD family. Fe(2+) is required as a cofactor.

It localises to the cytoplasm. The enzyme catalyses L-threonylcarbamoyladenylate + adenosine(37) in tRNA = N(6)-L-threonylcarbamoyladenosine(37) in tRNA + AMP + H(+). In terms of biological role, required for the formation of a threonylcarbamoyl group on adenosine at position 37 (t(6)A37) in tRNAs that read codons beginning with adenine. Is involved in the transfer of the threonylcarbamoyl moiety of threonylcarbamoyl-AMP (TC-AMP) to the N6 group of A37, together with TsaE and TsaB. TsaD likely plays a direct catalytic role in this reaction. This is tRNA N6-adenosine threonylcarbamoyltransferase from Limosilactobacillus reuteri (strain DSM 20016) (Lactobacillus reuteri).